The chain runs to 318 residues: DNA polymerase IV (318 aa).

Positions 6–186 (IIHIDMDAFY…LPLGKIPGVG (181 aa)) constitute a UmuC domain. Residues Asp10 and Asp104 each coordinate Mg(2+). Residue Glu105 is part of the active site.

This sequence belongs to the DNA polymerase type-Y family. Monomer. The cofactor is Mg(2+).

Its subcellular location is the cytoplasm. The enzyme catalyses DNA(n) + a 2'-deoxyribonucleoside 5'-triphosphate = DNA(n+1) + diphosphate. In terms of biological role, poorly processive, error-prone DNA polymerase involved in untargeted mutagenesis. Copies undamaged DNA at stalled replication forks, which arise in vivo from mismatched or misaligned primer ends. These misaligned primers can be extended by PolIV. Exhibits no 3'-5' exonuclease (proofreading) activity. May be involved in translesional synthesis, in conjunction with the beta clamp from PolIII. The polypeptide is DNA polymerase IV (Neisseria meningitidis serogroup B (strain ATCC BAA-335 / MC58)).